Consider the following 208-residue polypeptide: Probable GTP-binding protein EngB (208 aa).

An EngB-type G domain is found at 18–187 (KQFEICVIGR…FALMKKVVIQ (170 aa)). GTP-binding positions include 26-33 (GRSNVGKS), 52-56 (GRTQL), 69-72 (DLPG), 135-138 (NKLD), and 166-168 (VSA). Serine 33 and threonine 54 together coordinate Mg(2+).

Belongs to the TRAFAC class TrmE-Era-EngA-EngB-Septin-like GTPase superfamily. EngB GTPase family. Mg(2+) serves as cofactor.

Necessary for normal cell division and for the maintenance of normal septation. The sequence is that of Probable GTP-binding protein EngB from Ureaplasma parvum serovar 3 (strain ATCC 27815 / 27 / NCTC 11736).